The chain runs to 230 residues: Cytidylate kinase (230 aa).

12–20 (GPSGAGKGT) lines the ATP pocket.

The protein belongs to the cytidylate kinase family. Type 1 subfamily.

It is found in the cytoplasm. It carries out the reaction CMP + ATP = CDP + ADP. It catalyses the reaction dCMP + ATP = dCDP + ADP. The polypeptide is Cytidylate kinase (Shewanella piezotolerans (strain WP3 / JCM 13877)).